A 307-amino-acid chain; its full sequence is MKLDVIGAGAFGAGLAIAYARAGLDVTLWARDVAGLRGGESPRLPGHAFPDGLHVTGDLSACTADVALIAIPTQSIAGFVAKGGLAPRVAVSCAKGIDRSSGHGPTALLAALAPCTAQLTGPSFAADIARGLPTALTIACADAAEGAALQNALSTPTLRLYTTQDVIGAELGGALKNVIAIAAGAVIGKGLGDSARAALIARGFAEMTRYATAKGALPETLTGLSGLGDLILTCGSAQSRNFRFGHALATGDRLPEGTTVEGLHTARQLAASPEDTPIADTVAALADGTLDIDGALSHLLSRPLKPE.

F11, R31, and K95 together coordinate NADPH. Sn-glycerol 3-phosphate is bound by residues K95, G121, and S123. A125 contributes to the NADPH binding site. Positions 176, 229, 239, 240, and 241 each coordinate sn-glycerol 3-phosphate. The Proton acceptor role is filled by K176. Residue R240 participates in NADPH binding. Residue E261 coordinates NADPH.

The protein belongs to the NAD-dependent glycerol-3-phosphate dehydrogenase family.

The protein resides in the cytoplasm. It carries out the reaction sn-glycerol 3-phosphate + NAD(+) = dihydroxyacetone phosphate + NADH + H(+). The enzyme catalyses sn-glycerol 3-phosphate + NADP(+) = dihydroxyacetone phosphate + NADPH + H(+). It functions in the pathway membrane lipid metabolism; glycerophospholipid metabolism. Functionally, catalyzes the reduction of the glycolytic intermediate dihydroxyacetone phosphate (DHAP) to sn-glycerol 3-phosphate (G3P), the key precursor for phospholipid synthesis. The polypeptide is Glycerol-3-phosphate dehydrogenase [NAD(P)+] (Jannaschia sp. (strain CCS1)).